Consider the following 327-residue polypeptide: Interleukin-12 subunit beta (327 aa).

The N-terminal stretch at 1 to 22 (MCHQKLTISWFAMVLLVSPLMA) is a signal peptide. The 84-residue stretch at 23–106 (IWELEKDVYV…LSHSRLLLHK (84 aa)) folds into the Ig-like C2-type domain. A disulfide bridge connects residues cysteine 50 and cysteine 90. Residues asparagine 125, asparagine 135, asparagine 223, and asparagine 315 are each glycosylated (N-linked (GlcNAc...) asparagine). The Fibronectin type-III domain maps to 238–327 (PPKNLQLKPL…WSEWASVSCN (90 aa)).

This sequence belongs to the IL-12B family. Heterodimer with IL12A; disulfide-linked. The heterodimer is known as interleukin IL-12. Heterodimer with IL23A; disulfide-linked. The heterodimer is known as interleukin IL-23. Also secreted as a monomer. Interacts with NBR1; this interaction promotes IL-12 secretion.

It is found in the secreted. Its function is as follows. Cytokine that can act as a growth factor for activated T and NK cells, enhance the lytic activity of NK/lymphokine-activated killer cells, and stimulate the production of IFN-gamma by resting PBMC. Functionally, associates with IL23A to form the IL-23 interleukin, a heterodimeric cytokine which functions in innate and adaptive immunity. IL-23 may constitute with IL-17 an acute response to infection in peripheral tissues. IL-23 binds to a heterodimeric receptor complex composed of IL12RB1 and IL23R, activates the Jak-Stat signaling cascade, stimulates memory rather than naive T-cells and promotes production of pro-inflammatory cytokines. IL-23 induces autoimmune inflammation and thus may be responsible for autoimmune inflammatory diseases and may be important for tumorigenesis. The sequence is that of Interleukin-12 subunit beta (IL12B) from Sigmodon hispidus (Hispid cotton rat).